The primary structure comprises 376 residues: MASLSETLRSHWPIALFGVILFVAGGTELYWNEGRAVHNMMALDEAHADIYSVRFTEEEQEVGLEGRIVHLSGPILVGEPLTEPDYNIQLLAVKLRRRVQMYQWVEEAVEHNYGDSVGTTHSDSRTYYYTREWRDKIVDSRNFYNRHGHTNPSHFPIESHVQVADAVFIGRYELGAEVKEKFNNYQELTSDIRPEDSGVKLHLGIYYHTNDVFNPEVGDLRLLFSFAGMEGEVFSVVGKLSGNKLVPYITSRGVPVLLVYPGGLSVQEVFRLEARAQVLHTWWWRFVGWLLIFFGVTCNTKILRLLFVRVPLLVALAPDPQFPVTGNLLIAFSLALTIAAVAWILHRPVIGACLLLAGASPYVWFTRNLVDYHRLD.

Residues 1–10 lie on the Cytoplasmic side of the membrane; it reads MASLSETLRS. Residues 11–31 form a helical membrane-spanning segment; it reads HWPIALFGVILFVAGGTELYW. Topologically, residues 32–277 are lumenal; the sequence is NEGRAVHNMM…EVFRLEARAQ (246 aa). Residues 278-298 form a helical membrane-spanning segment; that stretch reads VLHTWWWRFVGWLLIFFGVTC. The Cytoplasmic segment spans residues 299-323; the sequence is NTKILRLLFVRVPLLVALAPDPQFP. A run of 2 helical transmembrane segments spans residues 324 to 344 and 345 to 365; these read VTGN…VAWI and LHRP…YVWF. The Cytoplasmic segment spans residues 366 to 376; it reads TRNLVDYHRLD.

The protein belongs to the TMEM43 family.

It localises to the endoplasmic reticulum membrane. The protein localises to the nucleus envelope. Involved in lipid metabolism and utilization. This Drosophila melanogaster (Fruit fly) protein is Transmembrane protein 43 homolog.